Consider the following 664-residue polypeptide: UvrABC system protein B (664 aa).

Residues 23–180 (EGLNRGMRFQ…EKLAKIGYQR (158 aa)) form the Helicase ATP-binding domain. 36 to 43 (GVTGSGKT) lines the ATP pocket. A Beta-hairpin motif is present at residues 89–112 (YYDYYQPEAYIPTKDLYIEKNADI). The Helicase C-terminal domain maps to 426 to 588 (QVDDLINEIV…ITPRSIVKPL (163 aa)). In terms of domain architecture, UVR spans 622–657 (EEYVALLEEEMYRAASELRYEDAAALRDELFRVKET).

The protein belongs to the UvrB family. In terms of assembly, forms a heterotetramer with UvrA during the search for lesions. Interacts with UvrC in an incision complex.

It is found in the cytoplasm. In terms of biological role, the UvrABC repair system catalyzes the recognition and processing of DNA lesions. A damage recognition complex composed of 2 UvrA and 2 UvrB subunits scans DNA for abnormalities. Upon binding of the UvrA(2)B(2) complex to a putative damaged site, the DNA wraps around one UvrB monomer. DNA wrap is dependent on ATP binding by UvrB and probably causes local melting of the DNA helix, facilitating insertion of UvrB beta-hairpin between the DNA strands. Then UvrB probes one DNA strand for the presence of a lesion. If a lesion is found the UvrA subunits dissociate and the UvrB-DNA preincision complex is formed. This complex is subsequently bound by UvrC and the second UvrB is released. If no lesion is found, the DNA wraps around the other UvrB subunit that will check the other stand for damage. In Thermotoga neapolitana (strain ATCC 49049 / DSM 4359 / NBRC 107923 / NS-E), this protein is UvrABC system protein B.